The chain runs to 274 residues: 2-dehydro-3-deoxyphosphooctonate aldolase (274 aa).

This sequence belongs to the KdsA family.

The protein localises to the cytoplasm. It carries out the reaction D-arabinose 5-phosphate + phosphoenolpyruvate + H2O = 3-deoxy-alpha-D-manno-2-octulosonate-8-phosphate + phosphate. Its pathway is carbohydrate biosynthesis; 3-deoxy-D-manno-octulosonate biosynthesis; 3-deoxy-D-manno-octulosonate from D-ribulose 5-phosphate: step 2/3. It participates in bacterial outer membrane biogenesis; lipopolysaccharide biosynthesis. The sequence is that of 2-dehydro-3-deoxyphosphooctonate aldolase from Rickettsia peacockii (strain Rustic).